The chain runs to 74 residues: Large ribosomal subunit protein uL14c (74 aa).

Belongs to the universal ribosomal protein uL14 family. As to quaternary structure, part of the 50S ribosomal subunit.

It localises to the plastid. Its subcellular location is the chloroplast. Its function is as follows. Binds to 23S rRNA. The chain is Large ribosomal subunit protein uL14c (rpl14) from Oenothera ammophila (Evening primerose).